Consider the following 237-residue polypeptide: V-type proton ATPase subunit E (237 aa).

It belongs to the V-ATPase E subunit family. V-ATPase is a heteromultimeric enzyme composed of a peripheral catalytic V1 complex (components A to H) attached to an integral membrane V0 proton pore complex (components: a, c, c', c'' and d).

Its function is as follows. Subunit of the peripheral V1 complex of vacuolar ATPase essential for assembly or catalytic function. V-ATPase is responsible for acidifying a variety of intracellular compartments in eukaryotic cells. This Gossypium hirsutum (Upland cotton) protein is V-type proton ATPase subunit E (VATE).